The primary structure comprises 1172 residues: Lysylphosphatidylglycerol biosynthesis bifunctional protein LysX (1172 aa).

A disordered region spans residues 1-34 (MGLHLTVPGLRRDGRGVQSNSHDTSSKTTADISR). The tract at residues 1–663 (MGLHLTVPGL…LLHHDGSAPD (663 aa)) is phosphatidylglycerol lysyltransferase. Over residues 17 to 31 (VQSNSHDTSSKTTAD) the composition is skewed to polar residues. 7 consecutive transmembrane segments (helical) span residues 80–100 (VPAAAGWTVGVIATLSLLASV), 122–142 (FPDTNFAWSFVLALLAAALTA), 146–166 (IAWLVLLANMVLAAVVNAAEI), 177–197 (FGENLGFAVHVVAIVVLVLGY), 214–234 (AVWLAGAVVGIVASWGLVELF), 272–292 (AIFGLFGAFALIGAAIVLFLS), and 612–632 (VIPRVGVASVIAEGFLVLPFS). Residues 664-1172 (VSGLRQVGLT…TLPFPLAKPH (509 aa)) form a lysine--tRNA ligase region. Positions 726–804 (VSVSGRIMRI…SLIVSGWRLI (79 aa)) form a DNA-binding region, OB. Residues Asp1084 and Glu1091 each contribute to the Mg(2+) site.

In the N-terminal section; belongs to the LPG synthetase family. It in the C-terminal section; belongs to the class-II aminoacyl-tRNA synthetase family. It depends on Mg(2+) as a cofactor.

The protein localises to the cell membrane. It catalyses the reaction tRNA(Lys) + L-lysine + ATP = L-lysyl-tRNA(Lys) + AMP + diphosphate. The enzyme catalyses L-lysyl-tRNA(Lys) + a 1,2-diacyl-sn-glycero-3-phospho-(1'-sn-glycerol) = a 1,2-diacyl-sn-glycero-3-phospho-1'-(3'-O-L-lysyl)-sn-glycerol + tRNA(Lys). Its function is as follows. Catalyzes the production of L-lysyl-tRNA(Lys)transfer and the transfer of a lysyl group from L-lysyl-tRNA(Lys) to membrane-bound phosphatidylglycerol (PG), which produces lysylphosphatidylglycerol (LPG), one of the components of the bacterial membrane with a positive net charge. LPG synthesis contributes to the resistance to cationic antimicrobial peptides (CAMPs) and likely protects M.tuberculosis against the CAMPs produced by competiting microorganisms (bacteriocins). In fact, the modification of anionic phosphatidylglycerol with positively charged L-lysine results in repulsion of the peptides. The chain is Lysylphosphatidylglycerol biosynthesis bifunctional protein LysX (lysX) from Mycobacterium bovis (strain BCG / Pasteur 1173P2).